A 2442-amino-acid chain; its full sequence is Centrosome-associated protein CEP250 (2442 aa).

4 coiled-coil regions span residues 95–158 (NLDE…KESQ), 244–352 (AQLL…TQVM), 395–1172 (LTRR…EQQP), and 1243–2227 (SALH…KERL). Composition is skewed to basic and acidic residues over residues 1273-1289 (LTDT…ELQD) and 1699-1715 (LTTQ…EGKG). Disordered stretches follow at residues 1273 to 1308 (LTDT…EGKQ), 1699 to 1725 (LTTQ…GSLE), and 1820 to 1839 (EALQ…VKEK). Residues 1820 to 1831 (EALQQEQQQAQG) show a composition bias toward low complexity. Phosphoserine is present on S2138. T2218 is subject to Phosphothreonine. Positions 2223 to 2244 (EKERLHSPGATSTAELGSRGEQ) are disordered. Residues S2229, S2252, and S2322 each carry the phosphoserine modification. The stretch at 2262 to 2376 (GMEKQSWRQR…RKQKQDYITR (115 aa)) forms a coiled coil. Disordered regions lie at residues 2307–2345 (RRKL…KNSD) and 2416–2442 (ESLT…AASR). The segment covering 2328–2338 (ATASSPTQQDG) has biased composition (polar residues). 2 positions are modified to phosphoserine; by NEK2: S2417 and S2421. Residues 2433-2442 (SPSTTQAASR) are compositionally biased toward polar residues.

In terms of assembly, monomer and homodimer. Forms a complex in vitro with both NEK2 kinase and the PPP1CC catalytic subunit of protein phosphatase 1 (PP1). Interacts with CEP135. Interacts with CROCC/rootletin. Interacts with CNTLN. Interacts with NIN (via C-terminus). Interacts with CCDC102B (via N-terminus); the interaction results in recruitment of CCDC102B to the proximal ends of centrioles. In terms of processing, differentially phosphorylated during cell cycle. Phosphorylation may regulate association/dissociation from centrosome. During M phase of mitosis, C-terminal part is phosphorylated by NEK2, suggesting that it may trigger the dissociation from the mitotic centrosome. Dephosphorylated in vitro by the PP1 phosphatase. In terms of tissue distribution, ubiquitously and weakly expressed.

The protein resides in the cytoplasm. It localises to the perinuclear region. It is found in the cytoskeleton. The protein localises to the microtubule organizing center. Its subcellular location is the centrosome. The protein resides in the centriole. It localises to the cilium basal body. It is found in the cell projection. The protein localises to the cilium. Its subcellular location is the photoreceptor outer segment. The protein resides in the photoreceptor inner segment. Functionally, plays an important role in centrosome cohesion during interphase. Recruits CCDC102B to the proximal ends of centrioles. Maintains centrosome cohesion by forming intercentriolar linkages. Accumulates at the proximal end of each centriole, forming supramolecular assemblies with viscous material properties that promote organelle cohesion. May be involved in ciliogenesis. This Homo sapiens (Human) protein is Centrosome-associated protein CEP250 (CEP250).